Consider the following 950-residue polypeptide: MSDKKRINQIAKETGLSNTELVATAQSLGFEVKSHSRSVTAEQAEKIIQGVKTGTDTIVKPAEKTVKAKTKTVPETAKSKQEDHPRTFAGKAVVEDPAILARIKEKEEAKKAAKTEAEPIEEVITTEKPKVAEPVKKSEPKAAAKAEETKVEKVEAKAKTVTPKAEVKTENVADKKEPVVTEEKKKSLTQKPRIQIKVIKRAEDIKKEQAAARPEKKKFDKNRNDRNNRNDNRRPNQNGNGQGHSQGGNHYDKNRPAGQGQNQGQKRDKFASSGSSSTSDTFTPAASGKNNRRDRDRKKTDSNRDNTKDGNRKGGPLRVNDNRNQVRNARNSNWNQKGGRGRYQNNQSSNVPATQRKFHELPESLEYEVGMNVQDIAKSIKREPAEIIKKLFMMGTMVNQNQSLDEDTIELILMDYGVTPLKKVEEDKSDIERLFVEDGYLNEDKMVERPAVVTIMGHVDHGKTTLLDRFRESRVTEGEAGGITQHIGAYQIKTNGKKITFLDTPGHEAFTSMRARGASVTDITILVVAADDGVMPQTIEAINHSKAAGVPIIVAINKIDKPGANPQRVTQELTEHGVFPVAWDPENGSEFVEISAKFNQNLEELLDTVLLVAEVQELKADPSVRAIGTVVEARLDQGKGAIATLLVQQGTLHIQDPIVVGNTYGRVRTMTNDLGRRIKEAGPSTPIELTGLSDVPQAGDHFAVFEDEKAARAAGEERAKRAQLIKRQNTRRVNLDNLFDTLKEGQTKSVNIIIKADVQGSAEALAASLQKIEVEGVKVDIVHSAVGAISESDISLAAASNAIIIGFNVRPTGLAREQAAQEEVDIRLHSIIYKVIEEVETAMRGMLDPEFKEEIIGEAIVRETFNVSKVGTIAGFMVIRGKVTRDASVRVIREGVVIHDGAIASLKHFKDDVKEVGNAQEGGLMVEDFNDVEIDDTFEVYKMVEIERKK.

2 disordered regions span residues 69–92 (KTKT…AGKA) and 128–352 (KPKV…SNVP). Basic and acidic residues-rich tracts occupy residues 77-86 (AKSKQEDHPR), 128-158 (KPKV…EAKA), 165-186 (AEVK…EKKK), 200-234 (KRAE…DNRR), and 291-312 (NRRD…DGNR). Polar residues-rich tracts occupy residues 322–336 (NRNQ…NWNQ) and 343–352 (YQNNQSSNVP). Positions 448–619 (ERPAVVTIMG…LLVAEVQELK (172 aa)) constitute a tr-type G domain. The tract at residues 457–464 (GHVDHGKT) is G1. Position 457–464 (457–464 (GHVDHGKT)) interacts with GTP. The interval 482 to 486 (GITQH) is G2. The G3 stretch occupies residues 503 to 506 (DTPG). GTP contacts are provided by residues 503 to 507 (DTPGH) and 557 to 560 (NKID). A G4 region spans residues 557–560 (NKID). The G5 stretch occupies residues 595 to 597 (SAK).

This sequence belongs to the TRAFAC class translation factor GTPase superfamily. Classic translation factor GTPase family. IF-2 subfamily.

The protein localises to the cytoplasm. One of the essential components for the initiation of protein synthesis. Protects formylmethionyl-tRNA from spontaneous hydrolysis and promotes its binding to the 30S ribosomal subunits. Also involved in the hydrolysis of GTP during the formation of the 70S ribosomal complex. The polypeptide is Translation initiation factor IF-2 (Lactococcus lactis subsp. cremoris (strain SK11)).